The primary structure comprises 367 residues: tRNA-specific 2-thiouridylase MnmA (367 aa).

ATP-binding positions include 14–21 (AMSGGVDS) and Leu40. Cys108 acts as the Nucleophile in catalysis. A disulfide bridge links Cys108 with Cys204. Gly132 contacts ATP. Positions 154 to 156 (KDQ) are interaction with tRNA. Cys204 acts as the Cysteine persulfide intermediate in catalysis.

It belongs to the MnmA/TRMU family.

It is found in the cytoplasm. It carries out the reaction S-sulfanyl-L-cysteinyl-[protein] + uridine(34) in tRNA + AH2 + ATP = 2-thiouridine(34) in tRNA + L-cysteinyl-[protein] + A + AMP + diphosphate + H(+). Its function is as follows. Catalyzes the 2-thiolation of uridine at the wobble position (U34) of tRNA, leading to the formation of s(2)U34. This Rickettsia bellii (strain OSU 85-389) protein is tRNA-specific 2-thiouridylase MnmA.